The following is a 1708-amino-acid chain: Rapamycin-insensitive companion of mTOR (1708 aa).

The segment at 1 to 789 (MAAIGRGRSL…DKANLHALIQ (789 aa)) is interaction with NBN. A phosphoserine mark is found at Ser21, Ser35, and Ser265. Residue Lys274 forms a Glycyl lysine isopeptide (Lys-Gly) (interchain with G-Cter in ubiquitin) linkage. The tract at residues 521-570 (LKDTEEALLINLRDSQVLQHKENLDWDWNLIGTILKWPNVNLRNYKDEQL) is ribosome-binding domain. Residues Asn543, Arg572, and Arg576 each contribute to the ATP site. Residues 1021 to 1043 (TLSLNSESTSSRHNSESESAPSS) are compositionally biased toward low complexity. The interval 1021–1045 (TLSLNSESTSSRHNSESESAPSSMF) is disordered. An N6-acetyllysine mark is found at Lys1092 and Lys1095. Disordered stretches follow at residues 1101 to 1198 (SLTL…ENTS) and 1218 to 1247 (SFNT…PTAM). A Phosphothreonine modification is found at Thr1103. Residues Lys1116, Lys1119, and Lys1125 each carry the N6-acetyllysine modification. Residue Thr1135 is modified to Phosphothreonine; by RPS6KB1. Position 1138 is a phosphoserine (Ser1138). A compositionally biased stretch (polar residues) spans 1147-1158 (FTSSSAQKSLQL). Phosphoserine is present on residues Ser1161, Ser1218, and Ser1234. Residues 1221-1239 (TDTTTSGISSMSSSPSRET) show a composition bias toward low complexity. Thr1270 carries the post-translational modification Phosphothreonine. Phosphoserine occurs at positions 1273, 1277, 1281, and 1283. Thr1294 bears the Phosphothreonine mark. Ser1301 and Ser1312 each carry phosphoserine. The residue at position 1331 (Thr1331) is a Phosphothreonine. Phosphoserine is present on residues Ser1345 and Ser1352. Thr1375 carries the post-translational modification Phosphothreonine. Ser1384 is subject to Phosphoserine. The residue at position 1385 (Tyr1385) is a Phosphotyrosine. Phosphoserine is present on residues Ser1387, Ser1395, and Ser1410. 3 residues coordinate Zn(2+): His1514, Cys1519, and Cys1522. Ser1570, Ser1573, Ser1576, and Ser1591 each carry phosphoserine. Cys1651 is a Zn(2+) binding site.

It belongs to the RICTOR family. As to quaternary structure, component of the mechanistic target of rapamycin complex 2 (mTORC2), consisting in two heterotretramers composed of MTOR, MLST8, RICTOR and MAPKAP1/SIN1. The mTORC2 core complex associates with PRR5/PROTOR1 and/or PRR5L/PROTOR2. Contrary to mTORC1, mTORC2 does not bind to and is not sensitive to FKBP12-rapamycin. Binds directly to MTOR and PRR5 within the TORC2 complex; interaction with MTOR is enhanced by deubiquitination of RICTOR by USP9X. Interaction with MAPKAP1 is not enhanced by RICTOR deubiquitination by USP9X. Interacts with CCDC28B. Interacts with NBN. Interacts with SIK3. Interacts with NCKAP1L. Interacts with ARMH4 (via cytoplasmic tail); this interaction bridges ARMH4 to the mTORC2 complex and inhibits the mTORC2 kinase activity. Interacts with UBXN2A. Interacts with TSPAN8. Post-translationally, phosphorylated by MTOR; when part of mTORC2. Phosphorylated at Thr-1135 by RPS6KB1 downstream of the mTORC1 complex: phosphorylation of RICTOR inhibits mTORC2 signaling by creating a binding site for 14-3-3 proteins. Phosphorylated at Ser-1234 by GSK3B in response to endoplasmic stress, inhibiting mTORC2 signaling. Ubiquitinated by the SCF(FBXW7) complex, leading to its degradation by the proteasome. Deubiquitinated by USP9X; deubiquitination stabilizes RICTOR and enhances its binding to MTOR, thus promoting mTORC2 complex assembly. In terms of processing, acetylated by EP300/p300 in response to glucose, leading to activate the mTORC2 complex. Acetylation by BLOC1S1/GCN5L1 in response to hypotoxic stress protects RICTOR against ubiquitination and subsequent degradation by the proteasome. As to expression, highest levels in liver and brain with expression also detected in heart, muscle, spleen and kidney (at protein level).

The protein resides in the cell membrane. It is found in the endoplasmic reticulum membrane. The protein localises to the lysosome membrane. Component of the mechanistic target of rapamycin complex 2 (mTORC2), which transduces signals from growth factors to pathways involved in proliferation, cytoskeletal organization, lipogenesis and anabolic output. In response to growth factors, mTORC2 phosphorylates and activates AGC protein kinase family members, including AKT (AKT1, AKT2 and AKT3), PKC (PRKCA, PRKCB and PRKCE) and SGK1. In contrast to mTORC1, mTORC2 is nutrient-insensitive. Within the mTORC2 complex, RICTOR probably acts as a molecular adapter. RICTOR is responsible for the FKBP12-rapamycin-insensitivity of mTORC2. mTORC2 plays a critical role in AKT1 activation by mediating phosphorylation of different sites depending on the context, such as 'Thr-450', 'Ser-473', 'Ser-477' or 'Thr-479', facilitating the phosphorylation of the activation loop of AKT1 on 'Thr-308' by PDPK1/PDK1 which is a prerequisite for full activation. mTORC2 catalyzes the phosphorylation of SGK1 at 'Ser-422' and of PRKCA on 'Ser-657'. The mTORC2 complex also phosphorylates various proteins involved in insulin signaling, such as FBXW8 and IGF2BP1. mTORC2 acts upstream of Rho GTPases to regulate the actin cytoskeleton, probably by activating one or more Rho-type guanine nucleotide exchange factors. mTORC2 promotes the serum-induced formation of stress-fibers or F-actin. Plays an essential role in embryonic growth and development. In Mus musculus (Mouse), this protein is Rapamycin-insensitive companion of mTOR.